The following is a 192-amino-acid chain: Ciliary microtubule-associated protein 3 (192 aa).

As to quaternary structure, interacts with proteins involved in ciliary transport, including ARL13B, CETN1, KIF3A, RAB6A, RAB8A, TUBB1 and TUBG1. Interacts with AURKA.

Its subcellular location is the cytoplasmic vesicle. It is found in the golgi apparatus. The protein localises to the trans-Golgi network. It localises to the cytoplasm. Functionally, during primary cilia disassembly, involved in cilia disassembly. Required specifically to control cilia retraction as well as the liberation and duplication of the basal body/centrosome. May act by stimulating AURKA activity at the basal body in a cell cycle-dependent manner. The protein is Ciliary microtubule-associated protein 3 (CIMAP3) of Bos taurus (Bovine).